Consider the following 101-residue polypeptide: Small ribosomal subunit protein uS10 (101 aa).

This sequence belongs to the universal ribosomal protein uS10 family. Part of the 30S ribosomal subunit.

Involved in the binding of tRNA to the ribosomes. The protein is Small ribosomal subunit protein uS10 of Christiangramia forsetii (strain DSM 17595 / CGMCC 1.15422 / KT0803) (Gramella forsetii).